Here is a 252-residue protein sequence, read N- to C-terminus: Ribosomal RNA small subunit methyltransferase J (252 aa).

S-adenosyl-L-methionine-binding positions include 101–102 (RD), 117–118 (ER), 153–154 (SS), and Asp-171.

This sequence belongs to the methyltransferase superfamily. RsmJ family.

The protein localises to the cytoplasm. It catalyses the reaction guanosine(1516) in 16S rRNA + S-adenosyl-L-methionine = N(2)-methylguanosine(1516) in 16S rRNA + S-adenosyl-L-homocysteine + H(+). Specifically methylates the guanosine in position 1516 of 16S rRNA. The chain is Ribosomal RNA small subunit methyltransferase J from Salmonella dublin (strain CT_02021853).